The chain runs to 387 residues: Protein RecA (387 aa).

Residue 78 to 85 participates in ATP binding; that stretch reads GPESSGKT. Basic and acidic residues predominate over residues 355–369; it reads KSIERDTKETKETKS. Residues 355-387 are disordered; the sequence is KSIERDTKETKETKSKQPVSFSTEADGDIAVGE.

It belongs to the RecA family.

Its subcellular location is the cytoplasm. In terms of biological role, can catalyze the hydrolysis of ATP in the presence of single-stranded DNA, the ATP-dependent uptake of single-stranded DNA by duplex DNA, and the ATP-dependent hybridization of homologous single-stranded DNAs. It interacts with LexA causing its activation and leading to its autocatalytic cleavage. The sequence is that of Protein RecA from Leptospira biflexa serovar Patoc (strain Patoc 1 / ATCC 23582 / Paris).